Consider the following 446-residue polypeptide: MNILSRIFARTPSLRTRVVVATAIGAAIPVLIVGTVVWVGITNDRKERLDRRLDEAAGFAIPFVPRGLDEIPRSPNDQDALITVRRGNVIKSNSDITLPKLQDDYADTYVRGVRYRVRTVEIPGPEPTSVAVGATYDATVAETNNLHRRVLLICTFAIGAAAVFAWLLAAFAVRPFKQLAEQTRSIDAGDEAPRVEVHGASEAIEIAEAMRGMLQRIWNEQNRTKEALASARDFAAVSSHELRTPLTAMRTNLEVLSTLDLPDDQRKEVLNDVIRTQSRIEATLSALERLAQGELSTSDDHVPVDITDLLDRAAHDAARIYPDLDVSLVPSPTCIIVGLPAGLRLAVDNAIANAVKHGGATLVQLSAVSSRAGVEIAIDDNGSGVPEGERQVVFERFSRGSTASHSGSGLGLALVAQQAQLHGGTASLENSPLGGARLVLRLPGPS.

A run of 2 helical transmembrane segments spans residues 19–39 and 151–171; these read VVAT…VVWV and LLIC…LAAF. The region spanning 172–222 is the HAMP domain; sequence AVRPFKQLAEQTRSIDAGDEAPRVEVHGASEAIEIAEAMRGMLQRIWNEQN. Residues 237-446 enclose the Histidine kinase domain; it reads VSSHELRTPL…RLVLRLPGPS (210 aa). His-240 carries the post-translational modification Phosphohistidine; by autocatalysis.

Autophosphorylated.

The protein localises to the cell membrane. It carries out the reaction ATP + protein L-histidine = ADP + protein N-phospho-L-histidine.. In terms of biological role, member of the two-component regulatory system PrrB/PrrA that is involved specifically in early intracellular multiplication of Mycobacterium and is essential for its viability. Functions as a sensor protein kinase which is autophosphorylated at a histidine residue and transfers its phosphate group to the conserved aspartic acid residue in the regulatory domain of PrrA. In turn, PrrA binds to the upstream promoter regions of target genes including itself to positively regulate their expression. The chain is Sensor-type histidine kinase PrrB (prrB) from Mycobacterium bovis (strain ATCC BAA-935 / AF2122/97).